Here is a 536-residue protein sequence, read N- to C-terminus: Solute carrier family 2, facilitated glucose transporter member 10 (536 aa).

Over 1–15 (MGLRPAVLLLCASVS) the chain is Cytoplasmic. Residues 16 to 36 (LLGGLTFGYELAVISGALLPL) form a helical membrane-spanning segment. Topologically, residues 37–48 (QLNFGLSCLEQE) are extracellular. A helical transmembrane segment spans residues 49 to 69 (LLVGSLLLGALLASLVGGFLI). The Cytoplasmic segment spans residues 70–82 (DCYGRRRAILGSN). The chain crosses the membrane as a helical span at residues 83 to 103 (AVLLAGSLILGLASSLPWLLL). At 104–107 (GRLS) the chain is on the extracellular side. The chain crosses the membrane as a helical span at residues 108-128 (VGFAISLSSMACCIYVSELVG). At 129–132 (PRQR) the chain is on the cytoplasmic side. A helical transmembrane segment spans residues 133 to 153 (GVLVSLYEVGITVGILFSYGL). The Extracellular segment spans residues 154-166 (NYVLAGSPWGWRH). A helical transmembrane segment spans residues 167–187 (MFGWAAAPALLQSLSLFLLPA). The Cytoplasmic segment spans residues 188–232 (GAEGTAAPKDLIPLQGRETSKPGLVKPQYSFLDLFRAQDGMWSRT). The chain crosses the membrane as a helical span at residues 233 to 253 (VVGLGLVLFQQLTGQPNVLYY). D-glucose is bound at residue 242-243 (QQ). Residues 254 to 269 (ASTIFRSVGFHGGSSA) are Extracellular-facing. Residues 270-290 (VLASVGLGTVKVAATLVATGL) traverse the membrane as a helical segment. Residues 291–298 (VDRAGRRV) lie on the Cytoplasmic side of the membrane. A helical membrane pass occupies residues 299–319 (LLLFGCALMALSVSGIGLVSF). Residues 320 to 402 (AVSLDSGPSC…VPTSPILEHT (83 aa)) are Extracellular-facing. A helical transmembrane segment spans residues 403–423 (LLCWSALVCMMVYVSAFSVGF). Over 424 to 442 (GPVTWLVLSEIYPAEIRGR) the chain is Cytoplasmic. Trp-428 lines the D-glucose pocket. The helical transmembrane segment at 443-463 (AFAFCSSFNWAANLFISLSFL) threads the bilayer. Topologically, residues 464–468 (DLIGA) are extracellular. A helical membrane pass occupies residues 469-489 (IGLAWTFLLYGLTAVLGLAFI). At 490–536 (YLLVPETKGQSLAEIEQQFQTSRFPLNFGHRQRIGIQYHRLDVSSAS) the chain is on the cytoplasmic side.

This sequence belongs to the major facilitator superfamily. Sugar transporter (TC 2.A.1.1) family. Glucose transporter subfamily.

Its subcellular location is the endomembrane system. It localises to the cytoplasm. The protein localises to the perinuclear region. It carries out the reaction D-glucose(out) = D-glucose(in). Facilitative glucose transporter required for the development of the cardiovascular system. The sequence is that of Solute carrier family 2, facilitated glucose transporter member 10 from Mus musculus (Mouse).